A 223-amino-acid chain; its full sequence is Uracil-DNA glycosylase (223 aa).

Asp61 acts as the Proton acceptor in catalysis.

It belongs to the uracil-DNA glycosylase (UDG) superfamily. UNG family.

The protein resides in the cytoplasm. The catalysed reaction is Hydrolyzes single-stranded DNA or mismatched double-stranded DNA and polynucleotides, releasing free uracil.. Its function is as follows. Excises uracil residues from the DNA which can arise as a result of misincorporation of dUMP residues by DNA polymerase or due to deamination of cytosine. The polypeptide is Uracil-DNA glycosylase (Tolumonas auensis (strain DSM 9187 / NBRC 110442 / TA 4)).